The following is a 612-amino-acid chain: Amyloid-beta precursor-like protein (612 aa).

The N-terminal stretch at 1-21 (MGPSVRPGFLVVVIGLQFVAA) is a signal peptide. Residues 22–542 (SMEVNSRKFE…NLYANSHANS (521 aa)) are Extracellular-facing. The interval 28–122 (RKFEPMVAFI…PFRCLVGPFQ (95 aa)) is GFLD subdomain. Residues 28-189 (RKFEPMVAFI…SGVEFVCCPK (162 aa)) enclose the E1 domain. Cystine bridges form between cysteine 38–cysteine 60, cysteine 71–cysteine 116, cysteine 96–cysteine 103, cysteine 132–cysteine 187, cysteine 143–cysteine 173, and cysteine 157–cysteine 186. N-linked (GlcNAc...) asparagine glycans are attached at residues asparagine 99, asparagine 108, and asparagine 150. A cuBD subdomain region spans residues 130–189 (EHCIFDHYHDPRVCNEFDQCNETAMSKCSARGMTTQSFAMLWPCQEPGHFSGVEFVCCPK). Positions 223-419 (GDSKYMSKYA…KQVRPNIDKF (197 aa)) constitute an E2 domain. 2 disordered regions span residues 251 to 276 (ERDT…TDPK) and 437 to 490 (QEPT…FDSE). Composition is skewed to basic and acidic residues over residues 439–453 (PTPK…KAED) and 470–483 (KPTE…EDIK). A helical transmembrane segment spans residues 543 to 563 (VLGIAIGGVVVFIIIVVAVVM). Residues 564–612 (LKRRTQRQRVTHGFVEVDPAASPEERHVANMQMSGYENPTYKYFEMQNQ) are Cytoplasmic-facing. A required for the interaction with kinesin heavy chain and for anterograde transport in axons region spans residues 598–612 (GYENPTYKYFEMQNQ). Positions 599–604 (YENPTY) match the YENPXY motif motif.

The protein belongs to the APP family. Interacts (via cytoplasmic domain) with kinesin heavy chain. As to expression, expressed in the cervicothoracic ganglion (stellate ganglion) (at protein level).

Its subcellular location is the cell membrane. It is found in the cell projection. The protein localises to the axon. Its function is as follows. Acts as a kinesin I membrane receptor, thereby playing a role in axonal anterograde transport of cargo towards synapses in axons. The polypeptide is Amyloid-beta precursor-like protein (Doryteuthis pealeii (Longfin inshore squid)).